The chain runs to 673 residues: Probable potassium transport system protein Kup 1 (673 aa).

The next 13 helical transmembrane spans lie at 14 to 34 (GAGF…SPLY), 58 to 78 (LSLI…WIAL), 101 to 121 (WLII…ALTP), 147 to 167 (LPIV…QRFG), 175 to 195 (FGPV…INLF), 196 to 216 (GDFS…LLSP), 220 to 240 (AGIF…ALYS), 252 to 272 (VSWP…AAWL), 294 to 314 (LIIF…QALI), 345 to 365 (LYIP…VVYF), 374 to 394 (AYGL…TVYL), 403 to 423 (VFVV…FAAS), and 427 to 447 (FLHG…VMAI).

Belongs to the HAK/KUP transporter (TC 2.A.72) family.

It is found in the cell membrane. The catalysed reaction is K(+)(in) + H(+)(in) = K(+)(out) + H(+)(out). Transport of potassium into the cell. Likely operates as a K(+):H(+) symporter. The protein is Probable potassium transport system protein Kup 1 of Lactococcus lactis subsp. cremoris (strain SK11).